We begin with the raw amino-acid sequence, 349 residues long: Glycerol-3-phosphate dehydrogenase [NAD(+)], cytoplasmic (349 aa).

10–15 (GSGNWG) lines the NAD(+) pocket. Residue Lys-120 participates in substrate binding. An NAD(+)-binding site is contributed by Ala-153. Ser-154 carries the phosphoserine modification. Residue Lys-204 is the Proton acceptor of the active site. Arg-269 is an NAD(+) binding site. Substrate is bound at residue 269-270 (RN). N6-succinyllysine is present on Lys-289. Residues Lys-296 and Gln-298 each contribute to the NAD(+) site. Tyr-326 carries the post-translational modification Phosphotyrosine.

This sequence belongs to the NAD-dependent glycerol-3-phosphate dehydrogenase family. In terms of assembly, homodimer.

The protein localises to the cytoplasm. It carries out the reaction sn-glycerol 3-phosphate + NAD(+) = dihydroxyacetone phosphate + NADH + H(+). Its function is as follows. Has glycerol-3-phosphate dehydrogenase activity. In Mus musculus (Mouse), this protein is Glycerol-3-phosphate dehydrogenase [NAD(+)], cytoplasmic.